We begin with the raw amino-acid sequence, 359 residues long: Alpha-N-acetylneuraminide alpha-2,8-sialyltransferase (359 aa).

Over 1–28 (MWGRWRGAGGRRGVAQPVIPQMKLLGGR) the chain is Cytoplasmic. The chain crosses the membrane as a helical; Signal-anchor for type II membrane protein span at residues 29–49 (VPLGASALGLLIVCWFYIFPG). Residues 50–359 (GERLPGHKEM…KKDVSSKKPH (310 aa)) are Lumenal-facing. 2 N-linked (GlcNAc...) asparagine glycosylation sites follow: N73 and N121. Disulfide bonds link C140–C289 and C154–C349. CMP-N-acetyl-beta-neuraminate contacts are provided by N145 and N168. The N-linked (GlcNAc...) asparagine glycan is linked to N247. CMP-N-acetyl-beta-neuraminate-binding residues include S276, T277, G278, W298, and H312. The Proton donor/acceptor role is filled by H324.

The protein belongs to the glycosyltransferase 29 family. Expressed in the dorsal blastopore lip and in the presumptive neuroectoderm in stage 11 embryos. During gastrulation, strongly expressed in the involuting mesoderm. At stages 13 and 16, expressed in the neural plate and neural fold, paraxial mesoderm and notochord. At stages 19 and 22 (neural tube and early tailbud), strongly expressed in the neural tube and notochord. At the tadpole stage, expressed in the head region, branchial arches and otic and optic primordia. Also localized in the notochord and weakly expressed in the somites. In adults, expressed in the brain and ovary. Isoform 2 (short) is expressed at a low level in the adult testis and muscle, and at a high level in the skin. Isoform 1 (long) is expressed at a high level in the adult lung and kidney. Both isoforms 1 and 2 are expressed in the gut and liver.

It localises to the golgi apparatus membrane. It carries out the reaction an N-acetyl-alpha-neuraminyl-(2-&gt;3)-beta-D-galactosyl derivative + CMP-N-acetyl-beta-neuraminate = an N-acetyl-alpha-neuraminyl-(2-&gt;8)-N-acetyl-alpha-neuraminyl-(2-&gt;3)-beta-D-galactosyl derivative + CMP + H(+). The enzyme catalyses a ganglioside GM3 (d18:1(4E)) + CMP-N-acetyl-beta-neuraminate = a ganglioside GD3 (d18:1(4E)) + CMP + H(+). The catalysed reaction is a ganglioside GD3 (d18:1(4E)) + CMP-N-acetyl-beta-neuraminate = a ganglioside GT3 (d18:1(4E)) + CMP + H(+). It catalyses the reaction a ganglioside GD1a (d18:1(4E)) + CMP-N-acetyl-beta-neuraminate = a ganglioside GT1a (d18:1(4E)) + CMP + H(+). It carries out the reaction a ganglioside GT1b (d18:1(4E)) + CMP-N-acetyl-beta-neuraminate = a ganglioside GQ1b (d18:1(4E)) + CMP + H(+). The enzyme catalyses a ganglioside GM1b (d18:1(4E)) + CMP-N-acetyl-beta-neuraminate = a ganglioside GD1c (d18:1(4E)) + CMP + H(+). The catalysed reaction is a ganglioside GD3 + CMP-N-acetyl-beta-neuraminate = a ganglioside GT3 + CMP + H(+). It catalyses the reaction [alpha-N-acetylneuraminyl-(2-&gt;8)](n)-alpha-N-acetylneuraminyl-(2-&gt;8)-alpha-N-acetylneuraminyl-(2-&gt;3)-beta-D-galactosyl-(1-&gt;4)-beta-D-glucosyl-(1&lt;-&gt;1)-ceramide + CMP-N-acetyl-beta-neuraminate = [alpha-N-acetylneuraminyl-(2-&gt;8)](n+1)-alpha-N-acetylneuraminyl-(2-&gt;8)-alpha-N-acetylneuraminyl-(2-&gt;3)-beta-D-galactosyl-(1-&gt;4)-beta-D-glucosyl-(1&lt;-&gt;1)-ceramide + CMP + H(+). It participates in protein modification; protein glycosylation. It functions in the pathway lipid metabolism; sphingolipid metabolism. Catalyzes the addition of sialic acid in alpha 2,8-linkage to the sialic acid moiety of the ganglioside GM3 to form ganglioside GD3; gangliosides are a subfamily of complex glycosphingolipds that contain one or more residues of sialic acid. Glycosphingolipids are required for convergence extension movements during early development. Can catalyze the addition of a second alpha-2,8- sialic acid to GD3 to form GT3. Can use GM1b, GD1a and GT1b as acceptor substrates to synthesize GD1c, GT1a and GQ1b respectively. This chain is Alpha-N-acetylneuraminide alpha-2,8-sialyltransferase, found in Xenopus laevis (African clawed frog).